Consider the following 157-residue polypeptide: 2-C-methyl-D-erythritol 2,4-cyclodiphosphate synthase (157 aa).

2 residues coordinate a divalent metal cation: aspartate 8 and histidine 10. 4-CDP-2-C-methyl-D-erythritol 2-phosphate contacts are provided by residues 8–10 (DVH) and 34–35 (HS). Histidine 42 contributes to the a divalent metal cation binding site. 4-CDP-2-C-methyl-D-erythritol 2-phosphate-binding positions include 56-58 (DIG), 61-65 (FPDTD), 132-135 (TTEE), and phenylalanine 139.

This sequence belongs to the IspF family. In terms of assembly, homotrimer. A divalent metal cation is required as a cofactor.

The enzyme catalyses 4-CDP-2-C-methyl-D-erythritol 2-phosphate = 2-C-methyl-D-erythritol 2,4-cyclic diphosphate + CMP. It functions in the pathway isoprenoid biosynthesis; isopentenyl diphosphate biosynthesis via DXP pathway; isopentenyl diphosphate from 1-deoxy-D-xylulose 5-phosphate: step 4/6. Involved in the biosynthesis of isopentenyl diphosphate (IPP) and dimethylallyl diphosphate (DMAPP), two major building blocks of isoprenoid compounds. Catalyzes the conversion of 4-diphosphocytidyl-2-C-methyl-D-erythritol 2-phosphate (CDP-ME2P) to 2-C-methyl-D-erythritol 2,4-cyclodiphosphate (ME-CPP) with a corresponding release of cytidine 5-monophosphate (CMP). The chain is 2-C-methyl-D-erythritol 2,4-cyclodiphosphate synthase from Clostridium botulinum (strain Eklund 17B / Type B).